Reading from the N-terminus, the 342-residue chain is MDILKSEILRKRQLVEDRNLLVENKKYFKRSELAKKEEEAYFERCGYRIQPKEEDQKPLTSSNPVLELELAEEKLPMTLSRQEVIRRLRERGEPIRLFGETDYDAFQRLRKIEILTPEVNKGLRNDLKAALDKIDQQYLNEIVGGQEPGEEDTQNDLKVHEENTTIEELEALGESLGKGDDHKDMDIITKFLKFLLGVWAKELNAREDYVKRSVQGKLNSATQKQTESYLRPLFRKLRKRNLPADIKESITDIIKFMLQREYVKANDAYLQMAIGNAPWPIGVTMVGIHARTGREKIFSKHVAHVLNDETQRKYIQGLKRLMTICQKHFPTDPSKCVEYNAL.

The residue at position 1 (methionine 1) is an N-acetylmethionine.

The protein belongs to the PRP18 family. As to quaternary structure, heterodimer with PPIH. Interacts with PRPF4 and with the spliceosome. Part of a complex containing U4/U6 snRNPs.

The protein resides in the nucleus speckle. In terms of biological role, participates in the second step of pre-mRNA splicing. The protein is Pre-mRNA-splicing factor 18 (PRPF18) of Pongo abelii (Sumatran orangutan).